The following is a 166-amino-acid chain: Eukaryotic translation initiation factor 5A (166 aa).

The disordered stretch occupies residues methionine 1–tyrosine 21. Lysine 53 is modified (hypusine). Residues glutamate 101–aspartate 121 form a disordered region. Residues methionine 112–aspartate 121 show a composition bias toward acidic residues.

The protein belongs to the eIF-5A family. Post-translationally, lys-53 undergoes hypusination, a unique post-translational modification that consists in the addition of a butylamino group from spermidine to lysine side chain, leading to the formation of the unusual amino acid hypusine. eIF-5As are the only known proteins to undergo this modification, which is essential for their function.

The protein localises to the cytoplasm. Its function is as follows. Translation factor that promotes translation elongation and termination, particularly upon ribosome stalling at specific amino acid sequence contexts. Binds between the exit (E) and peptidyl (P) site of the ribosome and promotes rescue of stalled ribosome: specifically required for efficient translation of polyproline-containing peptides as well as other motifs that stall the ribosome. Acts as a ribosome quality control (RQC) cofactor by joining the RQC complex to facilitate peptidyl transfer during CAT tailing step. This Leishmania donovani protein is Eukaryotic translation initiation factor 5A.